Here is a 548-residue protein sequence, read N- to C-terminus: Folylpolyglutamate synthase (548 aa).

130–133 is an ATP binding site; sequence GKGS. The Mg(2+) site is built by serine 157, glutamate 234, and histidine 262. Positions 382 and 396 each coordinate ATP.

Belongs to the folylpolyglutamate synthase family. Requires a monovalent cation as cofactor.

The protein localises to the mitochondrion inner membrane. It is found in the mitochondrion matrix. Its subcellular location is the cytoplasm. The catalysed reaction is (6S)-5,6,7,8-tetrahydrofolyl-(gamma-L-Glu)(n) + L-glutamate + ATP = (6S)-5,6,7,8-tetrahydrofolyl-(gamma-L-Glu)(n+1) + ADP + phosphate + H(+). Its pathway is cofactor biosynthesis; tetrahydrofolylpolyglutamate biosynthesis. In terms of biological role, catalyzes conversion of folates to polyglutamate derivatives allowing concentration of folate compounds in the cell and the intracellular retention of these cofactors, which are important substrates for most of the folate-dependent enzymes that are involved in one-carbon transfer reactions involved in purine, pyrimidine and amino acid synthesis. Required for methionine synthesis and maintenance of intact mitochondrial DNA. Involved in telomere maintenance. The protein is Folylpolyglutamate synthase of Saccharomyces cerevisiae (strain FostersO) (Baker's yeast).